Here is a 282-residue protein sequence, read N- to C-terminus: Protein N-terminal and lysine N-methyltransferase efm7 (282 aa).

Basic and acidic residues predominate over residues 1–13 (MSKPEEVVNHVPE). Residues 1-32 (MSKPEEVVNHVPEDEGSDIEAGGLFEDPPDFY) form a disordered region. S-adenosyl-L-methionine is bound by residues tryptophan 67, 93–95 (GAA), aspartate 115, tryptophan 152, and alanine 179.

Belongs to the class I-like SAM-binding methyltransferase superfamily. EFM7 family.

The protein localises to the cytoplasm. In terms of biological role, S-adenosyl-L-methionine-dependent protein methyltransferase that trimethylates the N-terminal glycine 'Gly-2' of elongation factor 1-alpha, before also catalyzing the mono- and dimethylation of 'Lys-3'. The protein is Protein N-terminal and lysine N-methyltransferase efm7 (nnt-1) of Neurospora crassa (strain ATCC 24698 / 74-OR23-1A / CBS 708.71 / DSM 1257 / FGSC 987).